The following is a 185-amino-acid chain: UPF0301 protein Shew_1144 (185 aa).

The protein belongs to the UPF0301 (AlgH) family.

The sequence is that of UPF0301 protein Shew_1144 from Shewanella loihica (strain ATCC BAA-1088 / PV-4).